Here is a 409-residue protein sequence, read N- to C-terminus: Phospho-N-acetylmuramoyl-pentapeptide-transferase (409 aa).

10 helical membrane passes run 23–43, 73–93, 95–115, 132–152, 214–234, 247–267, 279–299, 305–325, 331–351, and 386–406; these read YITF…TIFG, TPTM…LLLA, LNNI…AIGF, GIFK…TLYF, YAWL…SNGA, TSAI…NVIF, SGEM…FLWY, AVFM…VLAI, MLIP…VLQV, and KIVT…IVTL.

This sequence belongs to the glycosyltransferase 4 family. MraY subfamily. The cofactor is Mg(2+).

The protein resides in the cell inner membrane. The catalysed reaction is UDP-N-acetyl-alpha-D-muramoyl-L-alanyl-gamma-D-glutamyl-meso-2,6-diaminopimeloyl-D-alanyl-D-alanine + di-trans,octa-cis-undecaprenyl phosphate = di-trans,octa-cis-undecaprenyl diphospho-N-acetyl-alpha-D-muramoyl-L-alanyl-D-glutamyl-meso-2,6-diaminopimeloyl-D-alanyl-D-alanine + UMP. It participates in cell wall biogenesis; peptidoglycan biosynthesis. In terms of biological role, catalyzes the initial step of the lipid cycle reactions in the biosynthesis of the cell wall peptidoglycan: transfers peptidoglycan precursor phospho-MurNAc-pentapeptide from UDP-MurNAc-pentapeptide onto the lipid carrier undecaprenyl phosphate, yielding undecaprenyl-pyrophosphoryl-MurNAc-pentapeptide, known as lipid I. In Flavobacterium psychrophilum (strain ATCC 49511 / DSM 21280 / CIP 103535 / JIP02/86), this protein is Phospho-N-acetylmuramoyl-pentapeptide-transferase.